Reading from the N-terminus, the 144-residue chain is Maximins 6/Hv (144 aa).

An N-terminal signal peptide occupies residues 1–18; it reads MNFKYIVAVSFLIASGYA. A propeptide spanning residues 19–43 is cleaved from the precursor; the sequence is RSEENDVQSLSQREVLEEETLREIR. Position 70 is an asparagine amide (Asn-70). A propeptide spanning residues 74–123 is cleaved from the precursor; that stretch reads TAKGHEVMKRLEAVMRDLDSLDHPEEASERETRGFNQEEIANLFTKKEKR. At Ile-143 the chain carries Isoleucine amide.

This sequence belongs to the bombinin family. Expressed by the skin glands.

Its subcellular location is the secreted. In terms of biological role, shows antimicrobial activity against bacteria and against the fungus C.albicans. It has little hemolytic activity. Functionally, shows antimicrobial activity against bacteria and against the fungus C.albicans. Shows strong hemolytic activity. The protein is Maximins 6/Hv of Bombina maxima (Giant fire-bellied toad).